We begin with the raw amino-acid sequence, 189 residues long: Putative biopolymer transport protein ExbB-like 1 (189 aa).

3 consecutive transmembrane segments (helical) span residues 14-34 (FVTT…LWVF), 99-119 (LVVL…GTVV), and 147-167 (LIAT…YLIL).

This sequence belongs to the ExbB/TolQ family.

The protein localises to the cell inner membrane. This is Putative biopolymer transport protein ExbB-like 1 from Helicobacter pylori (strain J99 / ATCC 700824) (Campylobacter pylori J99).